The chain runs to 89 residues: Large ribosomal subunit protein bL27 (89 aa).

The segment at 1 to 22 (MAHKKAGGSSRNGRDSAGRRLG) is disordered.

Belongs to the bacterial ribosomal protein bL27 family.

This Dinoroseobacter shibae (strain DSM 16493 / NCIMB 14021 / DFL 12) protein is Large ribosomal subunit protein bL27.